We begin with the raw amino-acid sequence, 221 residues long: UPF0758 protein YicR (221 aa).

Positions 99-221 (ALLSPEMTRE…YVSFAERGWI (123 aa)) constitute an MPN domain. His-170, His-172, and Asp-183 together coordinate Zn(2+). The JAMM motif signature appears at 170-183 (HNHPSGCAEPSKAD).

Belongs to the UPF0758 family. YicR subfamily.

This chain is UPF0758 protein YicR, found in Salmonella paratyphi A (strain ATCC 9150 / SARB42).